The sequence spans 103 residues: MAGGKGGKGMGKVGAKRHSKRSNKASIEGITKPAIRRLARRGGVKRISSFIYDDSRQVLKSFLENVVRDAVTYTEHARRKTVTAMDVVYALKRQGRTLYGFGG.

A compositionally biased stretch (gly residues) spans 1–12; that stretch reads MAGGKGGKGMGK. The interval 1–29 is disordered; sequence MAGGKGGKGMGKVGAKRHSKRSNKASIEG. Residues Lys-5, Lys-8, Lys-12, and Lys-16 each carry the N6-acetyllysine modification. A compositionally biased stretch (basic residues) spans 14–23; that stretch reads GAKRHSKRSN. Residues 16–21 mediate DNA binding; it reads KRHSKR.

This sequence belongs to the histone H4 family. As to quaternary structure, the nucleosome is a histone octamer containing two molecules each of H2A, H2B, H3 and H4 assembled in one H3-H4 heterotetramer and two H2A-H2B heterodimers. The octamer wraps approximately 147 bp of DNA.

Its subcellular location is the nucleus. The protein resides in the chromosome. Its function is as follows. Core component of nucleosome. Nucleosomes wrap and compact DNA into chromatin, limiting DNA accessibility to the cellular machineries which require DNA as a template. Histones thereby play a central role in transcription regulation, DNA repair, DNA replication and chromosomal stability. DNA accessibility is regulated via a complex set of post-translational modifications of histones, also called histone code, and nucleosome remodeling. This Tetrahymena pyriformis protein is Histone H4, major.